Reading from the N-terminus, the 300-residue chain is 4-hydroxy-tetrahydrodipicolinate synthase (300 aa).

Thr56 contributes to the pyruvate binding site. Tyr145 serves as the catalytic Proton donor/acceptor. Catalysis depends on Lys173, which acts as the Schiff-base intermediate with substrate. Val215 lines the pyruvate pocket.

Belongs to the DapA family. Homotetramer; dimer of dimers.

It localises to the cytoplasm. It catalyses the reaction L-aspartate 4-semialdehyde + pyruvate = (2S,4S)-4-hydroxy-2,3,4,5-tetrahydrodipicolinate + H2O + H(+). It participates in amino-acid biosynthesis; L-lysine biosynthesis via DAP pathway; (S)-tetrahydrodipicolinate from L-aspartate: step 3/4. Its function is as follows. Catalyzes the condensation of (S)-aspartate-beta-semialdehyde [(S)-ASA] and pyruvate to 4-hydroxy-tetrahydrodipicolinate (HTPA). This chain is 4-hydroxy-tetrahydrodipicolinate synthase, found in Prochlorococcus marinus (strain AS9601).